The primary structure comprises 121 residues: CRISPR system Cms protein Csm2 (121 aa).

It belongs to the CRISPR-associated Csm2 family. As to quaternary structure, part of the Csm effector complex that includes at least Cas10(1), Csm2(3), Csm3(5), Csm4(1), Csm5(1) and mature crRNA. The Csm complex is elongated and slightly twisted with a maximal length of 215 Angstroms and a diameter of 75-80 Angstroms. It has been modeled to have a central protein filamant of Csm3 subunits along which the dsRNA helix of paired crRNA and target RNA binds. The filament is capped at one end by Cas10 and Csm4 and at the other end by Csm5; ssDNA is thought to bind to the N-terminal HD domain of Cas10. Csm with a precursor crRNA does not include Csm5, while Cas6, the enzyme probably involved in pre-crRNA processing, is found associated with a subset of the Csm complex.

Its function is as follows. CRISPR (clustered regularly interspaced short palindromic repeat) is an adaptive immune system that provides protection against mobile genetic elements (viruses, transposable elements and conjugative plasmids). CRISPR clusters contain spacers, sequences complementary to antecedent mobile elements, and target invading nucleic acids. CRISPR clusters are transcribed and processed into CRISPR RNA (crRNA). The type III-A Csm effector complex binds crRNA and acts as a crRNA-guided RNase, DNase and cyclic oligoadenylate synthase; binding of target RNA cognate to the crRNA is required for all activities. In a heterologous host this Csm effector complex restricts ssRNA phage MS2, suggesting it may target RNA viruses in vivo. In terms of biological role, csm functions as a non-specific ssDNase. Base-pairing between crRNA and target RNA to form a ternary Csm complex activates a ssDNase activity; target RNA cleavage suppresses the ssDNase, a temporal control that prevents uncontrolled DNA degradation. Viral RNA transcripts probably tether the Csm complex to the viral genome, recruiting Cas10 ssDNA activity which is able to degrade DNA in the transcription bubble, spatially controlling the DNase activity. This subunit may be involved in monitoring complementarity of crRNA and target RNA. This chain is CRISPR system Cms protein Csm2, found in Streptococcus thermophilus.